We begin with the raw amino-acid sequence, 282 residues long: Sirohydrochlorin cobaltochelatase CbiKC (282 aa).

Histidine 166 serves as the catalytic Proton acceptor. 2 residues coordinate Co(2+): histidine 166 and histidine 228.

The protein belongs to the CbiK family.

It localises to the cytoplasm. The enzyme catalyses Co-sirohydrochlorin + 2 H(+) = sirohydrochlorin + Co(2+). It catalyses the reaction siroheme + 2 H(+) = sirohydrochlorin + Fe(2+). Its pathway is cofactor biosynthesis; adenosylcobalamin biosynthesis; cob(II)yrinate a,c-diamide from sirohydrochlorin (anaerobic route): step 1/10. It functions in the pathway porphyrin-containing compound metabolism; siroheme biosynthesis; siroheme from sirohydrochlorin: step 1/1. Functionally, catalyzes the insertion of Co(2+) into sirohydrochlorin as part of the anaerobic pathway to cobalamin biosynthesis. To a lesser extent, is also able to insert Fe(2+) into sirohydrochlorin, yielding siroheme. This chain is Sirohydrochlorin cobaltochelatase CbiKC (cbiKc), found in Nitratidesulfovibrio vulgaris (strain ATCC 29579 / DSM 644 / CCUG 34227 / NCIMB 8303 / VKM B-1760 / Hildenborough) (Desulfovibrio vulgaris).